We begin with the raw amino-acid sequence, 338 residues long: L-serine dehydratase (338 aa).

The residue at position 39 (lysine 39) is an N6-(pyridoxal phosphate)lysine.

Belongs to the serine/threonine dehydratase family. Requires pyridoxal 5'-phosphate as cofactor.

The protein resides in the cytoplasm. It catalyses the reaction L-serine = pyruvate + NH4(+). It functions in the pathway carbohydrate biosynthesis; gluconeogenesis. This is L-serine dehydratase (SDL1) from Saccharomyces cerevisiae (Baker's yeast).